Consider the following 137-residue polypeptide: Small heat shock protein IbpA (137 aa).

Residues 28-137 form the sHSP domain; the sequence is NQSNGGYPPY…SLKPRRIEIK (110 aa).

This sequence belongs to the small heat shock protein (HSP20) family. Monomer. Forms homomultimers of about 100-150 subunits at optimal growth temperatures. Conformation changes to monomers at high temperatures or high ionic concentrations.

The protein localises to the cytoplasm. Functionally, associates with aggregated proteins, together with IbpB, to stabilize and protect them from irreversible denaturation and extensive proteolysis during heat shock and oxidative stress. Aggregated proteins bound to the IbpAB complex are more efficiently refolded and reactivated by the ATP-dependent chaperone systems ClpB and DnaK/DnaJ/GrpE. Its activity is ATP-independent. This Yersinia pseudotuberculosis serotype O:1b (strain IP 31758) protein is Small heat shock protein IbpA.